The primary structure comprises 318 residues: Transaldolase (318 aa).

Lysine 126 acts as the Schiff-base intermediate with substrate in catalysis.

It belongs to the transaldolase family. Type 1 subfamily. In terms of assembly, homodimer.

The protein resides in the cytoplasm. The catalysed reaction is D-sedoheptulose 7-phosphate + D-glyceraldehyde 3-phosphate = D-erythrose 4-phosphate + beta-D-fructose 6-phosphate. It participates in carbohydrate degradation; pentose phosphate pathway; D-glyceraldehyde 3-phosphate and beta-D-fructose 6-phosphate from D-ribose 5-phosphate and D-xylulose 5-phosphate (non-oxidative stage): step 2/3. Transaldolase is important for the balance of metabolites in the pentose-phosphate pathway. The protein is Transaldolase of Variovorax paradoxus (strain S110).